A 281-amino-acid polypeptide reads, in one-letter code: Elongation factor Ts (281 aa).

Positions 86–89 are involved in Mg(2+) ion dislocation from EF-Tu; it reads TDFV.

Belongs to the EF-Ts family.

It localises to the cytoplasm. Its function is as follows. Associates with the EF-Tu.GDP complex and induces the exchange of GDP to GTP. It remains bound to the aminoacyl-tRNA.EF-Tu.GTP complex up to the GTP hydrolysis stage on the ribosome. This Beutenbergia cavernae (strain ATCC BAA-8 / DSM 12333 / CCUG 43141 / JCM 11478 / NBRC 16432 / NCIMB 13614 / HKI 0122) protein is Elongation factor Ts.